We begin with the raw amino-acid sequence, 149 residues long: Large ribosomal subunit protein bL9 (149 aa).

Belongs to the bacterial ribosomal protein bL9 family.

In terms of biological role, binds to the 23S rRNA. This is Large ribosomal subunit protein bL9 from Mannheimia succiniciproducens (strain KCTC 0769BP / MBEL55E).